The chain runs to 67 residues: Systemic RNA interference defective protein 5 (67 aa).

The Extracellular segment spans residues 1–18 (MPSKNCAKNLHACQWERD). The helical transmembrane segment at 19 to 39 (IALVFLGLMVLFNIGQVVYMN) threads the bilayer. At 40-67 (RARLYRLIRRGAEQIPADDEEPIIGIRD) the chain is on the cytoplasmic side.

Ubiquitously present in most tissues tested. Expressed in the somatic cells of intestine, muscle, neurons, somatic gonad and embryos but not in the germline (at protein level).

Its subcellular location is the late endosome membrane. Functionally, plays a role in RNA-mediated gene silencing by mediating transport of both ingested and endogenous dsRNA between cells. Not required for the uptake of dsRNA from the intestinal lumen. This chain is Systemic RNA interference defective protein 5, found in Caenorhabditis elegans.